Reading from the N-terminus, the 279-residue chain is 3-methyl-2-oxobutanoate hydroxymethyltransferase (279 aa).

Positions 43 and 82 each coordinate Mg(2+). 3-methyl-2-oxobutanoate is bound by residues 43 to 44 (DS), Asp82, and Lys112. Glu114 is a binding site for Mg(2+). Glu181 (proton acceptor) is an active-site residue.

It belongs to the PanB family. As to quaternary structure, homodecamer; pentamer of dimers. It depends on Mg(2+) as a cofactor.

The protein resides in the cytoplasm. The catalysed reaction is 3-methyl-2-oxobutanoate + (6R)-5,10-methylene-5,6,7,8-tetrahydrofolate + H2O = 2-dehydropantoate + (6S)-5,6,7,8-tetrahydrofolate. The protein operates within cofactor biosynthesis; (R)-pantothenate biosynthesis; (R)-pantoate from 3-methyl-2-oxobutanoate: step 1/2. In terms of biological role, catalyzes the reversible reaction in which hydroxymethyl group from 5,10-methylenetetrahydrofolate is transferred onto alpha-ketoisovalerate to form ketopantoate. This is 3-methyl-2-oxobutanoate hydroxymethyltransferase from Exiguobacterium sibiricum (strain DSM 17290 / CCUG 55495 / CIP 109462 / JCM 13490 / 255-15).